A 152-amino-acid chain; its full sequence is Acidic phospholipase A2 S16-19 (152 aa).

Residues 1-19 (MYPAHLLVLLAVCVSLLGA) form the signal peptide. A propeptide spanning residues 20 to 27 (SNIPLPSL) is cleaved from the precursor. 6 disulfide bridges follow: C38-C104, C54-C151, C71-C132, C78-C125, C88-C118, and C111-C123. The Ca(2+) site is built by Y55, G57, and G59. H75 is an active-site residue. Position 76 (D76) interacts with Ca(2+). D126 is an active-site residue.

This sequence belongs to the phospholipase A2 family. Group I subfamily. D49 sub-subfamily. Ca(2+) is required as a cofactor. This enzyme lacks one of the seven disulfide bonds found in similar PLA2 proteins. As to expression, expressed by the venom gland.

It is found in the secreted. The catalysed reaction is a 1,2-diacyl-sn-glycero-3-phosphocholine + H2O = a 1-acyl-sn-glycero-3-phosphocholine + a fatty acid + H(+). Functionally, snake venom phospholipase A2 (PLA2) that inhibits collagen-induced platelet aggregation. PLA2 catalyzes the calcium-dependent hydrolysis of the 2-acyl groups in 3-sn-phosphoglycerides. The protein is Acidic phospholipase A2 S16-19 of Austrelaps superbus (Lowland copperhead snake).